Reading from the N-terminus, the 549-residue chain is Urocanate hydratase (549 aa).

NAD(+) is bound by residues 46-47 (GG), Gln124, 170-172 (GMG), Glu190, Arg195, 236-237 (NA), 257-261 (QTSAH), 267-268 (YV), and Tyr316. Cys404 is an active-site residue. NAD(+) is bound at residue Gly486.

Belongs to the urocanase family. The cofactor is NAD(+).

The protein resides in the cytoplasm. The enzyme catalyses 4-imidazolone-5-propanoate = trans-urocanate + H2O. It functions in the pathway amino-acid degradation; L-histidine degradation into L-glutamate; N-formimidoyl-L-glutamate from L-histidine: step 2/3. Its function is as follows. Catalyzes the conversion of urocanate to 4-imidazolone-5-propionate. In Caldanaerobacter subterraneus subsp. tengcongensis (strain DSM 15242 / JCM 11007 / NBRC 100824 / MB4) (Thermoanaerobacter tengcongensis), this protein is Urocanate hydratase.